Here is a 319-residue protein sequence, read N- to C-terminus: Phosphoenolpyruvate transferase (319 aa).

Asp-50 contributes to the 7,8-didemethyl-8-hydroxy-5-deazariboflavin binding site.

Belongs to the CofD family. In terms of assembly, homodimer. Requires Mg(2+) as cofactor.

The catalysed reaction is enolpyruvoyl-2-diphospho-5'-guanosine + 7,8-didemethyl-8-hydroxy-5-deazariboflavin = dehydro coenzyme F420-0 + GMP + H(+). Its pathway is cofactor biosynthesis; coenzyme F420 biosynthesis. Catalyzes the transfer of the phosphoenolpyruvate moiety from enoylpyruvoyl-2-diphospho-5'-guanosine (EPPG) to 7,8-didemethyl-8-hydroxy-5-deazariboflavin (FO) with the formation of dehydro coenzyme F420-0 and GMP. The sequence is that of Phosphoenolpyruvate transferase from Streptomyces coelicolor (strain ATCC BAA-471 / A3(2) / M145).